The primary structure comprises 581 residues: Jasmonoyl--L-amino acid synthetase GH3.5 (581 aa).

Ser92 is an ATP binding site. Ser95 provides a ligand contact to jasmonate. ATP-binding positions include Thr115, Asn161, and 324–329; that span reads GASEGW. 159–163 contacts an L-alpha-amino acid; the sequence is TTNLY. Jasmonate-binding positions include 321 to 324 and Ser326; that span reads ADYG. 534–538 contributes to the an L-alpha-amino acid binding site; sequence EILDH. Lys561 serves as a coordination point for ATP.

The protein belongs to the IAA-amido conjugating enzyme family. Expressed in green shoots, roots and flowers.

It catalyses the reaction a jasmonate + an L-alpha-amino acid + ATP = a jasmonyl-L-amino acid + AMP + diphosphate + H(+). Catalyzes the synthesis of jasmonate-amino acid conjugates by adenylation. Catalyzes the conjugation of jasmonate (JA) to Ile when expressed in a heterologous system (E.coli). Catalyzes in vitro the conjugation of jasmonate (JA) to Ile, Phe, Cys, Leu, Met, Ala, Val and Trp. Involved in the production of JA-Ile in response to infection by the rice blast fungus Magnaporthe oryzae. Required for the accumulation of the flavonoid phytoalexin sakuranetin in response to infection by the rice blast fungus. Involved in herbivory-induced JA-Ile accumulation. Involved in the production of JA-Ile in response to wounding. Required for modulation of light and JA signaling in photomorphogenesis. Required for normal seed development. Required for optimal flower opening and closing and anther dehiscence. May catalyze the synthesis of indole-3-acetic acid (IAA)-amino acid conjugates, providing a mechanism for the plant to cope with the presence of excess auxin. This Oryza sativa subsp. japonica (Rice) protein is Jasmonoyl--L-amino acid synthetase GH3.5.